A 313-amino-acid chain; its full sequence is MLARNNSLVTEFILAGLTDHPEFRQPLFFLFLVIYIVTMVGNLGLITLFGLNSHLHTPMYYFLFNLSFIDLCYSSVFTPKMLMNFVSKKNIISNVGCMTRLFFFLFFVISECYMLTSMAYDRYVAICNPLLYKVTMSHQVCSMLTFAAYIMGLAGATAHTGCMLRLTFCSANIINHYLCDILPLLQLSCTSTYVNEVVVLIVVGTNITVPSCTILISYVFIVTSILHIKSTQGRSKAFSTCSSHVIALSLFFGSAAFMYIKYSSGSMEQGKVSSVFYTNVVPMLNPLIYSLRNKDVKVALRKALIKIQRRNIF.

Residues 1 to 25 (MLARNNSLVTEFILAGLTDHPEFRQ) are Extracellular-facing. Residue N5 is glycosylated (N-linked (GlcNAc...) asparagine). The chain crosses the membrane as a helical span at residues 26 to 46 (PLFFLFLVIYIVTMVGNLGLI). The Cytoplasmic portion of the chain corresponds to 47 to 54 (TLFGLNSH). The helical transmembrane segment at 55–75 (LHTPMYYFLFNLSFIDLCYSS) threads the bilayer. The Extracellular portion of the chain corresponds to 76–99 (VFTPKMLMNFVSKKNIISNVGCMT). Cysteines 97 and 189 form a disulfide. The chain crosses the membrane as a helical span at residues 100 to 120 (RLFFFLFFVISECYMLTSMAY). The Cytoplasmic segment spans residues 121–139 (DRYVAICNPLLYKVTMSHQ). Residues 140–160 (VCSMLTFAAYIMGLAGATAHT) form a helical membrane-spanning segment. Topologically, residues 161 to 197 (GCMLRLTFCSANIINHYLCDILPLLQLSCTSTYVNEV) are extracellular. Residues 198–217 (VVLIVVGTNITVPSCTILIS) traverse the membrane as a helical segment. Topologically, residues 218 to 237 (YVFIVTSILHIKSTQGRSKA) are cytoplasmic. Residues 238-258 (FSTCSSHVIALSLFFGSAAFM) traverse the membrane as a helical segment. The Extracellular portion of the chain corresponds to 259–270 (YIKYSSGSMEQG). Residues 271-291 (KVSSVFYTNVVPMLNPLIYSL) form a helical membrane-spanning segment. Over 292–313 (RNKDVKVALRKALIKIQRRNIF) the chain is Cytoplasmic.

It belongs to the G-protein coupled receptor 1 family.

Its subcellular location is the cell membrane. Functionally, odorant receptor. In Homo sapiens (Human), this protein is Olfactory receptor 8B2 (OR8B2).